A 616-amino-acid chain; its full sequence is Matrix metalloproteinase-21 (616 aa).

Positions 1–22 (MPTAPALGALLLLLGALTPGHQ) are cleaved as a signal peptide. The propeptide occupies 23 to 192 (EKLFHSRDHS…TSTSKIRKKR (170 aa)). The Cysteine switch motif lies at 139 to 146 (PRCGVPDN). Cysteine 141 serves as a coordination point for Zn(2+). Positions 157–186 (SNSNNVTEKASGKSLNTTTNQNPENGTSTS) are disordered. N-linked (GlcNAc...) asparagine glycans are attached at residues asparagine 161, asparagine 172, and asparagine 181. A Zn(2+)-binding site is contributed by histidine 329. Residue glutamate 330 is part of the active site. Residues histidine 333 and histidine 339 each coordinate Zn(2+). A disulfide bridge links cysteine 375 with cysteine 606. Hemopexin repeat units follow at residues 376–435 (EGSF…WHGI), 437–493 (AEGI…FPKI), 494–542 (PSPI…FPAV), and 549–605 (FGNI…WTDI). Residue asparagine 418 is glycosylated (N-linked (GlcNAc...) asparagine). Asparagine 597 is a glycosylation site (N-linked (GlcNAc...) asparagine).

Belongs to the peptidase M10A family. It depends on Zn(2+) as a cofactor. The cofactor is Ca(2+). In terms of processing, the precursor is cleaved by a furin endopeptidase.

It localises to the secreted. In terms of biological role, may play a role in gastrulation-related cell movement. Plays a specialized role in the generation of left-right asymmetry during embryogenesis. May act as a negative regulator of the NOTCH-signaling pathway. This Cynops pyrrhogaster (Japanese fire-bellied newt) protein is Matrix metalloproteinase-21 (MMP21).